The chain runs to 100 residues: Urease subunit gamma (100 aa).

Belongs to the urease gamma subunit family. As to quaternary structure, heterotrimer of UreA (gamma), UreB (beta) and UreC (alpha) subunits. Three heterotrimers associate to form the active enzyme.

Its subcellular location is the cytoplasm. It carries out the reaction urea + 2 H2O + H(+) = hydrogencarbonate + 2 NH4(+). Its pathway is nitrogen metabolism; urea degradation; CO(2) and NH(3) from urea (urease route): step 1/1. This is Urease subunit gamma from Rhizobium rhizogenes (strain K84 / ATCC BAA-868) (Agrobacterium radiobacter).